The primary structure comprises 292 residues: MFDDQDEIHPLLAGAPQTTEFRKLRKRIVREVREAIETYGMVERGARWLVCLSGGKDSYTLLAVLHELKWRGLLPVDLLACNLDQGQPGFPATVLPEFLSRMGVPHRIEYQDTYSIVMDKIPQGRTYCALCSRLRRGNLYRIAREEGCSAVVLGHHRDDILETFFMNLFHGGRLATMPPKLVNEDGDLFVYRPLAFVAEADCEKFARDMAYPIIPCDLCGSQEGLQRQQVKQILDGWEARSPGRRQVMFRALMNARPSHLLDPGLFDFLGLATAPRASEERQDEPPHLRGEA.

Positions 53–58 (SGGKDS) match the PP-loop motif motif. Residues Cys-128, Cys-131, and Cys-219 each contribute to the [4Fe-4S] cluster site.

It belongs to the TtcA family. As to quaternary structure, homodimer. It depends on Mg(2+) as a cofactor. [4Fe-4S] cluster serves as cofactor.

The protein resides in the cytoplasm. The catalysed reaction is cytidine(32) in tRNA + S-sulfanyl-L-cysteinyl-[cysteine desulfurase] + AH2 + ATP = 2-thiocytidine(32) in tRNA + L-cysteinyl-[cysteine desulfurase] + A + AMP + diphosphate + H(+). The protein operates within tRNA modification. In terms of biological role, catalyzes the ATP-dependent 2-thiolation of cytidine in position 32 of tRNA, to form 2-thiocytidine (s(2)C32). The sulfur atoms are provided by the cysteine/cysteine desulfurase (IscS) system. The protein is tRNA-cytidine(32) 2-sulfurtransferase of Cereibacter sphaeroides (strain ATCC 17023 / DSM 158 / JCM 6121 / CCUG 31486 / LMG 2827 / NBRC 12203 / NCIMB 8253 / ATH 2.4.1.) (Rhodobacter sphaeroides).